The sequence spans 259 residues: MNHLDKNAKKSLGQNFLRDKNIINKIVNVFNIENEKVLEIGPGQGDLTKELLKKAKKVLAFEIDKSLIEHLKNEIKDLHFELRDQDFLNVNLNDDEFKDYYVVANIPYYITSDILLKIYRSFWNFKGIVLMVQKEVAQRIVAQKNSKNYSKLSISSQYLADVKIEFIVNKNSFIPAPKVDSAVISLKFKDNIDKENLEKMLKFFLVCFANRRKKLTFTLNRNFNSTKVKLAYEKLNLSDNARIQELDVSQIVLLFTYLN.

Residues asparagine 15, leucine 17, glycine 41, glutamate 62, aspartate 86, and asparagine 105 each contribute to the S-adenosyl-L-methionine site.

Belongs to the class I-like SAM-binding methyltransferase superfamily. rRNA adenine N(6)-methyltransferase family. RsmA subfamily.

It is found in the cytoplasm. It catalyses the reaction adenosine(1518)/adenosine(1519) in 16S rRNA + 4 S-adenosyl-L-methionine = N(6)-dimethyladenosine(1518)/N(6)-dimethyladenosine(1519) in 16S rRNA + 4 S-adenosyl-L-homocysteine + 4 H(+). Functionally, specifically dimethylates two adjacent adenosines (A1518 and A1519) in the loop of a conserved hairpin near the 3'-end of 16S rRNA in the 30S particle. May play a critical role in biogenesis of 30S subunits. The chain is Ribosomal RNA small subunit methyltransferase A from Mycoplasmopsis synoviae (strain 53) (Mycoplasma synoviae).